Reading from the N-terminus, the 150-residue chain is Urease accessory protein UreE (150 aa).

This sequence belongs to the UreE family.

The protein resides in the cytoplasm. In terms of biological role, involved in urease metallocenter assembly. Binds nickel. Probably functions as a nickel donor during metallocenter assembly. The chain is Urease accessory protein UreE from Parasynechococcus marenigrum (strain WH8102).